A 390-amino-acid chain; its full sequence is Phosphoglycerate kinase (390 aa).

Residues 21–23 (DLN), Arg36, 59–62 (HLGR), Arg114, and Arg147 contribute to the substrate site. ATP-binding positions include Lys198, Glu314, and 340 to 343 (GGDT).

The protein belongs to the phosphoglycerate kinase family. Monomer.

Its subcellular location is the cytoplasm. The catalysed reaction is (2R)-3-phosphoglycerate + ATP = (2R)-3-phospho-glyceroyl phosphate + ADP. It functions in the pathway carbohydrate degradation; glycolysis; pyruvate from D-glyceraldehyde 3-phosphate: step 2/5. This Buchnera aphidicola subsp. Acyrthosiphon pisum (strain 5A) protein is Phosphoglycerate kinase.